Consider the following 644-residue polypeptide: Exoribonuclease 2 (644 aa).

Residues 189–516 (RQDLTALNFV…NHRLLKAVIK (328 aa)) form the RNB domain. Residues 561–643 (NTRFAAEIID…ETRSIIARPA (83 aa)) form the S1 motif domain.

The protein belongs to the RNR ribonuclease family. RNase II subfamily.

The protein resides in the cytoplasm. It carries out the reaction Exonucleolytic cleavage in the 3'- to 5'-direction to yield nucleoside 5'-phosphates.. Involved in mRNA degradation. Hydrolyzes single-stranded polyribonucleotides processively in the 3' to 5' direction. The sequence is that of Exoribonuclease 2 from Salmonella paratyphi A (strain ATCC 9150 / SARB42).